A 226-amino-acid polypeptide reads, in one-letter code: ATP-dependent dethiobiotin synthetase BioD (226 aa).

12–17 serves as a coordination point for ATP; the sequence is DAGKTV. Residue threonine 16 coordinates Mg(2+). Lysine 39 is an active-site residue. Serine 43 is a substrate binding site. Residues aspartate 47, 108–111, 168–169, 200–202, and asparagine 207 each bind ATP; these read EGVG, NC, and PYL. Residues aspartate 47 and glutamate 108 each contribute to the Mg(2+) site.

This sequence belongs to the dethiobiotin synthetase family. In terms of assembly, homodimer. Requires Mg(2+) as cofactor.

Its subcellular location is the cytoplasm. The enzyme catalyses (7R,8S)-7,8-diammoniononanoate + CO2 + ATP = (4R,5S)-dethiobiotin + ADP + phosphate + 3 H(+). It carries out the reaction (7R,8S)-8-amino-7-(carboxyamino)nonanoate + ATP = (4R,5S)-dethiobiotin + ADP + phosphate + H(+). The protein operates within cofactor biosynthesis; biotin biosynthesis; biotin from 7,8-diaminononanoate: step 1/2. Its function is as follows. Catalyzes a mechanistically unusual reaction, the ATP-dependent insertion of CO2 between the N7 and N8 nitrogen atoms of 7,8-diaminopelargonic acid (DAPA, also called 7,8-diammoniononanoate) to form a ureido ring. This cyanobacterium does not encode bioA (which catalyzes the formation of the precursor for this reaction in the cannonical pathway), instead it encodes bioU, which replaces bioA and also performs the first half of the cannonical BioD reaction. Thus in this organism BioD has a different substrate. This Cyanothece sp. (strain PCC 7425 / ATCC 29141) protein is ATP-dependent dethiobiotin synthetase BioD.